The following is a 151-amino-acid chain: F-box protein GID2 (151 aa).

Residues 1–25 (MKRSTTDSDLAGDAHNETNKKMKST) are compositionally biased toward basic and acidic residues. The interval 1–27 (MKRSTTDSDLAGDAHNETNKKMKSTEE) is disordered. One can recognise an F-box domain in the interval 29-75 (EIGFSNLDENLVYEVLKHVDAKTLAMSSCVSKIWHKTAQDERLWELI).

As to quaternary structure, part of some SCF(GID2) complex, which consist of SKP1B, CUL1 cullin, GID2/SLY1 and some RING box protein. Interacts directly with SKP1A and SKP1B. Interacts directly with DELLA proteins GAI, RGA, RGL1, RGL3 and probably RGL2. May have a higher affinity for phosphorylated DELLA proteins. Expressed in all tissues tested, including rosette leaves, green siliques, flowers, stems, cauline leaves and seedlings.

The protein localises to the nucleus. The protein operates within protein modification; protein ubiquitination. Functionally, essential component of the SCF-type E3 ligase complex, SCF(GID2), a complex that positively regulates the gibberellin signaling pathway. Upon gibberellin treatment, the SCF(GID2) complex mediates the ubiquitination and subsequent degradation of DELLA proteins (GAI, RGA and RGL2), some repressors of the gibberellin pathway, leading to activate the pathway. The sequence is that of F-box protein GID2 (GID2) from Arabidopsis thaliana (Mouse-ear cress).